The chain runs to 276 residues: Chymotrypsin (276 aa).

The N-terminal stretch at 1–16 is a signal peptide; that stretch reads MKVALVVLALFGVSLA. Residues 17-45 constitute a propeptide, activation peptide; the sequence is ASIDNIEIPPSKNIYVEPINQPEVDPSLE. Positions 46–272 constitute a Peptidase S1 domain; the sequence is IVNGQEVVPH…YLNWLQTHSE (227 aa). A disulfide bridge connects residues Cys74 and Cys90. Catalysis depends on charge relay system residues His89 and Asp135. 2 N-linked (GlcNAc...) asparagine glycosylation sites follow: Asn144 and Asn193. 2 disulfides stabilise this stretch: Cys202–Cys215 and Cys225–Cys250. The active-site Charge relay system is Ser229.

This sequence belongs to the peptidase S1 family. Expressed in larval carcasses and gut, and adult gut.

It localises to the secreted. The protein localises to the extracellular space. The catalysed reaction is Preferential cleavage: Tyr-|-Xaa, Trp-|-Xaa, Phe-|-Xaa, Leu-|-Xaa.. Functionally, serine protease with chymotryptic and collagenolytic activities. The chain is Chymotrypsin from Phaedon cochleariae (Mustard beetle).